The primary structure comprises 536 residues: Membrane protein insertase YidC (536 aa).

5 consecutive transmembrane segments (helical) span residues 3-23 (LQRN…WKTW), 346-366 (ICGN…GITF), 417-437 (GGCF…YMLI), 454-474 (LSDQ…MFFI), and 494-514 (IPIL…LYYL).

Belongs to the OXA1/ALB3/YidC family. Type 1 subfamily. In terms of assembly, interacts with the Sec translocase complex via SecD. Specifically interacts with transmembrane segments of nascent integral membrane proteins during membrane integration.

Its subcellular location is the cell membrane. Required for the insertion and/or proper folding and/or complex formation of integral membrane proteins into the membrane. Involved in integration of membrane proteins that insert both dependently and independently of the Sec translocase complex, as well as at least some lipoproteins. Aids folding of multispanning membrane proteins. This is Membrane protein insertase YidC from Buchnera aphidicola subsp. Baizongia pistaciae (strain Bp).